The sequence spans 381 residues: Prostatic acid phosphatase (381 aa).

The signal sequence occupies residues 1 to 31 (MRAVPLHLVGTASLTLGFLLLLSLRLDPGQA). Residue Arg42 coordinates substrate. His43 (nucleophile) is an active-site residue. Position 46 (Arg46) interacts with substrate. Asn93 carries N-linked (GlcNAc...) asparagine glycosylation. Residue Arg110 participates in substrate binding. Intrachain disulfides connect Cys160–Cys371, Cys214–Cys312, and Cys346–Cys350. Asn219 carries N-linked (GlcNAc...) asparagine glycosylation. A substrate-binding site is contributed by His288. Residue Asp289 is the Proton donor of the active site. Asn332 carries N-linked (GlcNAc...) asparagine glycosylation.

It belongs to the histidine acid phosphatase family. Homodimer; dimer formation is required for phosphatase activity. Post-translationally, N-glycosylated. Expressed in prostate epithelium. Also expressed in the pelvic nerve and sacral spinal cord. Localizes in peptidergic and non-peptidergic nociceptive (pain-sensing) neurons.

The protein resides in the secreted. Its subcellular location is the cell membrane. It is found in the lysosome membrane. The enzyme catalyses a phosphate monoester + H2O = an alcohol + phosphate. It catalyses the reaction a ribonucleoside 5'-phosphate + H2O = a ribonucleoside + phosphate. It carries out the reaction 1-(9Z-octadecenoyl)-sn-glycero-3-phosphate + H2O = 1-(9Z-octadecenoyl)-sn-glycerol + phosphate. The catalysed reaction is O-phospho-L-tyrosyl-[protein] + H2O = L-tyrosyl-[protein] + phosphate. Its activity is regulated as follows. Inhibited by L(+)-tartrate. Its function is as follows. A non-specific tyrosine phosphatase that dephosphorylates a diverse number of substrates under acidic conditions (pH 4-6) including alkyl, aryl, and acyl orthophosphate monoesters and phosphorylated proteins. Has lipid phosphatase activity and inactivates lysophosphatidic acid in seminal plasma. In addition to its tyrosine phosphatase activity, also has ecto-5'-nucleotidase activity in dorsal root ganglion (DRG) neurons. Generates adenosine from AMP. This extracellular adenosine leads to a decrease in chronic pain by activating A1R in nociceptive neurons. The sequence is that of Prostatic acid phosphatase (Acp3) from Rattus norvegicus (Rat).